A 469-amino-acid chain; its full sequence is Citrate synthase, mitochondrial (469 aa).

A mitochondrion-targeting transit peptide spans 1 to 31; that stretch reads MTLLTASSRAAARLLGAKNSSCIIFAARHAS. Active-site residues include H304 and H350. An oxaloacetate-binding site is contributed by R359. D405 is a catalytic residue. Oxaloacetate is bound by residues R431 and R451.

It belongs to the citrate synthase family. In terms of assembly, homodimer.

It localises to the mitochondrion matrix. It carries out the reaction oxaloacetate + acetyl-CoA + H2O = citrate + CoA + H(+). Its pathway is carbohydrate metabolism; tricarboxylic acid cycle; isocitrate from oxaloacetate: step 1/2. Its function is as follows. Key enzyme of the Krebs tricarboxylic acid cycle which catalyzes the synthesis of citrate from acetyl coenzyme A and oxaloacetate. This is Citrate synthase, mitochondrial (CS) from Amblyrhynchus cristatus (Galapagos marine iguana).